The following is a 338-amino-acid chain: Probable tRNA pseudouridine synthase B (338 aa).

Residue Asp-82 is the Nucleophile of the active site. One can recognise a PUA domain in the interval 250 to 325 (LPKVWIRDSA…IAVDVDKVFM (76 aa)).

The protein belongs to the pseudouridine synthase TruB family. Type 2 subfamily.

The enzyme catalyses uridine(55) in tRNA = pseudouridine(55) in tRNA. In terms of biological role, could be responsible for synthesis of pseudouridine from uracil-55 in the psi GC loop of transfer RNAs. The sequence is that of Probable tRNA pseudouridine synthase B from Thermococcus kodakarensis (strain ATCC BAA-918 / JCM 12380 / KOD1) (Pyrococcus kodakaraensis (strain KOD1)).